We begin with the raw amino-acid sequence, 1112 residues long: DNA repair protein rad13 (1112 aa).

Positions 1-95 (MGVSGLWDIL…QTIQKRQARR (95 aa)) are N-domain. Residues aspartate 30 and aspartate 77 each coordinate Mg(2+). Residues 395–414 (TDDLILQLATQQSLEENKKS) enclose the UIM domain. An I-domain region spans residues 742–870 (KRSEKRDADE…LALEILHEFP (129 aa)). Residues glutamate 777, glutamate 779, aspartate 798, aspartate 800, and aspartate 849 each coordinate Mg(2+). The segment at 1056 to 1112 (KMMASKNSSDSDSDSEDNFLASLTPKTNSSSISIENLPRKTKLSTSLLKKPSKRRRK) is disordered. Polar residues predominate over residues 1079 to 1089 (TPKTNSSSISI).

Belongs to the XPG/RAD2 endonuclease family. XPG subfamily. The cofactor is Mg(2+).

It is found in the nucleus. In terms of biological role, single-stranded DNA endonuclease involved in excision repair of DNA damaged with UV light, bulky adducts, or cross-linking agents. Essential for the incision step of excision-repair. This chain is DNA repair protein rad13 (rad13), found in Schizosaccharomyces pombe (strain 972 / ATCC 24843) (Fission yeast).